The primary structure comprises 481 residues: Cysteine--tRNA ligase (481 aa).

Residue Cys-29 coordinates Zn(2+). The 'HIGH' region motif lies at 31-41 (PTVYDYSHLGH). Residues Cys-210, His-235, and Glu-239 each coordinate Zn(2+). The 'KMSKS' region signature appears at 272–276 (KMSKS). Position 275 (Lys-275) interacts with ATP.

This sequence belongs to the class-I aminoacyl-tRNA synthetase family. In terms of assembly, monomer. Zn(2+) is required as a cofactor.

The protein resides in the cytoplasm. It catalyses the reaction tRNA(Cys) + L-cysteine + ATP = L-cysteinyl-tRNA(Cys) + AMP + diphosphate. The polypeptide is Cysteine--tRNA ligase (Anaeromyxobacter dehalogenans (strain 2CP-1 / ATCC BAA-258)).